Consider the following 217-residue polypeptide: Phosphatidylserine decarboxylase proenzyme (217 aa).

S183 acts as the Schiff-base intermediate with substrate; via pyruvic acid in catalysis. S183 carries the pyruvic acid (Ser); by autocatalysis modification.

It belongs to the phosphatidylserine decarboxylase family. PSD-A subfamily. As to quaternary structure, heterodimer of a large membrane-associated beta subunit and a small pyruvoyl-containing alpha subunit. Pyruvate is required as a cofactor. Post-translationally, is synthesized initially as an inactive proenzyme. Formation of the active enzyme involves a self-maturation process in which the active site pyruvoyl group is generated from an internal serine residue via an autocatalytic post-translational modification. Two non-identical subunits are generated from the proenzyme in this reaction, and the pyruvate is formed at the N-terminus of the alpha chain, which is derived from the carboxyl end of the proenzyme. The post-translation cleavage follows an unusual pathway, termed non-hydrolytic serinolysis, in which the side chain hydroxyl group of the serine supplies its oxygen atom to form the C-terminus of the beta chain, while the remainder of the serine residue undergoes an oxidative deamination to produce ammonia and the pyruvoyl prosthetic group on the alpha chain.

The protein resides in the cell membrane. It carries out the reaction a 1,2-diacyl-sn-glycero-3-phospho-L-serine + H(+) = a 1,2-diacyl-sn-glycero-3-phosphoethanolamine + CO2. It participates in phospholipid metabolism; phosphatidylethanolamine biosynthesis; phosphatidylethanolamine from CDP-diacylglycerol: step 2/2. Functionally, catalyzes the formation of phosphatidylethanolamine (PtdEtn) from phosphatidylserine (PtdSer). In Cupriavidus pinatubonensis (strain JMP 134 / LMG 1197) (Cupriavidus necator (strain JMP 134)), this protein is Phosphatidylserine decarboxylase proenzyme.